Consider the following 346-residue polypeptide: MRSQDLHQRLADLGAKPLHCGRIVRAWLQGRALDACTARQRAEDFLPLGVRHGLPQVAAELEGIARLHSEHPASDGSSRLLVELADRQMVESVLLPRGGLCVSTQVGCAVGCVFCMTGRSGLLRQVGSLEMVAQVVLARRRRAVKKVVFMGMGEPAHNLDNVLEAIDLLGTDGGIGHKNLVFSTVGDPRVFERLPRQRVKPALALSLHSTRAELRRQLLPKAPPLSPEELVEAGEAYARRVDYPIQYQWTLLEGINDSLEEMDGILRLLKGRFAVMNLIPYNSMDGDAYRRPSGERIVELVRYLHSRGVLTKVRNSAGQDIDGGCGQLRARATQGTAERRIPARQA.

E91 (proton acceptor) is an active-site residue. A Radical SAM core domain is found at 94–320; it reads LLPRGGLCVS…TKVRNSAGQD (227 aa). A disulfide bridge links C101 with C325. The [4Fe-4S] cluster site is built by C108, C112, and C115. S-adenosyl-L-methionine-binding positions include 153 to 154, S183, 206 to 208, and N282; these read GE and SLH. C325 (S-methylcysteine intermediate) is an active-site residue.

Belongs to the radical SAM superfamily. RlmN family. Requires [4Fe-4S] cluster as cofactor.

The protein resides in the cytoplasm. The sequence is that of Probable RNA methyltransferase PA1839 from Pseudomonas aeruginosa (strain ATCC 15692 / DSM 22644 / CIP 104116 / JCM 14847 / LMG 12228 / 1C / PRS 101 / PAO1).